Consider the following 469-residue polypeptide: 6-phospho-beta-galactosidase (469 aa).

Residues Q19, H116, N159, E160, and N297 each coordinate D-galactose 6-phosphate. Catalysis depends on E160, which acts as the Proton donor. The active-site Nucleophile is E375. D-galactose 6-phosphate contacts are provided by S428, W429, K435, and Y437.

It belongs to the glycosyl hydrolase 1 family.

It catalyses the reaction a 6-phospho-beta-D-galactoside + H2O = D-galactose 6-phosphate + an alcohol. It participates in carbohydrate metabolism; lactose degradation; D-galactose 6-phosphate and beta-D-glucose from lactose 6-phosphate: step 1/1. This chain is 6-phospho-beta-galactosidase, found in Streptococcus equi subsp. zooepidemicus (strain MGCS10565).